The following is a 335-amino-acid chain: Holliday junction branch migration complex subunit RuvB (335 aa).

The segment at 1–181 is large ATPase domain (RuvB-L); that stretch reads MTRILDNDLI…FGITGHMEYY (181 aa). ATP contacts are provided by residues Leu20, Arg21, Gly62, Lys65, Thr66, Thr67, 128-130, Arg171, Tyr181, and Arg218; that span reads EDF. Residue Thr66 participates in Mg(2+) binding. Residues 182–252 are small ATPAse domain (RuvB-S); the sequence is QTADLTEIVE…ITDKALTMLD (71 aa). Positions 255–335 are head domain (RuvB-H); the sequence is QEGLDYVDQK…GYPYEKTIKT (81 aa). Residues Arg291, Arg310, Arg312, and Arg315 each coordinate DNA.

This sequence belongs to the RuvB family. As to quaternary structure, homohexamer. Forms an RuvA(8)-RuvB(12)-Holliday junction (HJ) complex. HJ DNA is sandwiched between 2 RuvA tetramers; dsDNA enters through RuvA and exits via RuvB. An RuvB hexamer assembles on each DNA strand where it exits the tetramer. Each RuvB hexamer is contacted by two RuvA subunits (via domain III) on 2 adjacent RuvB subunits; this complex drives branch migration. In the full resolvosome a probable DNA-RuvA(4)-RuvB(12)-RuvC(2) complex forms which resolves the HJ.

Its subcellular location is the cytoplasm. The catalysed reaction is ATP + H2O = ADP + phosphate + H(+). Functionally, the RuvA-RuvB-RuvC complex processes Holliday junction (HJ) DNA during genetic recombination and DNA repair, while the RuvA-RuvB complex plays an important role in the rescue of blocked DNA replication forks via replication fork reversal (RFR). RuvA specifically binds to HJ cruciform DNA, conferring on it an open structure. The RuvB hexamer acts as an ATP-dependent pump, pulling dsDNA into and through the RuvAB complex. RuvB forms 2 homohexamers on either side of HJ DNA bound by 1 or 2 RuvA tetramers; 4 subunits per hexamer contact DNA at a time. Coordinated motions by a converter formed by DNA-disengaged RuvB subunits stimulates ATP hydrolysis and nucleotide exchange. Immobilization of the converter enables RuvB to convert the ATP-contained energy into a lever motion, pulling 2 nucleotides of DNA out of the RuvA tetramer per ATP hydrolyzed, thus driving DNA branch migration. The RuvB motors rotate together with the DNA substrate, which together with the progressing nucleotide cycle form the mechanistic basis for DNA recombination by continuous HJ branch migration. Branch migration allows RuvC to scan DNA until it finds its consensus sequence, where it cleaves and resolves cruciform DNA. The sequence is that of Holliday junction branch migration complex subunit RuvB from Streptococcus equi subsp. equi (strain 4047).